The primary structure comprises 458 residues: Forkhead box protein J1-A (458 aa).

Polar residues predominate over residues 68-78 (TGQHTSPSSHS). The interval 68–99 (TGQHTSPSSHSHLMGSDAPSSPLAGDPASIGM) is disordered. Residues 142–236 (KPPYSYATLI…LNGAYKKRRL (95 aa)) constitute a DNA-binding region (fork-head). Basic residues predominate over residues 305–321 (TNKRKQPYNHRTGKTPR). Positions 305–324 (TNKRKQPYNHRTGKTPRRSS) are disordered.

This sequence belongs to the FOXJ1 family. As to expression, expressed in floor plate, dorsal forerunner cells, Kupffers vesicle, the floor plate, pronephric ducts and kidney.

It localises to the nucleus. In terms of biological role, key transcription factor required for motile ciliogenesis. Activates genes essential for motile cilia formation and function. Its activity is sufficient for ectopic development of cilia that resemble motile cilia. The protein is Forkhead box protein J1-A of Danio rerio (Zebrafish).